The sequence spans 473 residues: Cysteine--tRNA ligase (473 aa).

Residue cysteine 28 coordinates Zn(2+). A 'HIGH' region motif is present at residues 30 to 40 (MTVYDYCHLGH). Zn(2+)-binding residues include cysteine 209, histidine 234, and glutamate 238. Positions 282–286 (KMSKS) match the 'KMSKS' region motif. Position 285 (lysine 285) interacts with ATP.

Belongs to the class-I aminoacyl-tRNA synthetase family. In terms of assembly, monomer. The cofactor is Zn(2+).

The protein localises to the cytoplasm. It carries out the reaction tRNA(Cys) + L-cysteine + ATP = L-cysteinyl-tRNA(Cys) + AMP + diphosphate. In Neisseria meningitidis serogroup B (strain ATCC BAA-335 / MC58), this protein is Cysteine--tRNA ligase.